The sequence spans 223 residues: MATPQSIFIFAICILMITELILASKSYYDILGVPKSASERQIKKAFHKLAMKYHPDKNKSPDAEAKFREIAEAYETLSDANRRKEYDTLGHSAFTNGKGQRGSGSSFEQSFNFNFDDLFKDFGFFGQNQNTRSKKHFENHFQTRPDGGSSRQRHHFQEFSFGGGLFDDMFEDMEKMFSFSGFDPTSRHTVQTENRFHGSSKHCRTVTQRRGNMVTTYTDCSGQ.

A signal peptide spans 1–23; the sequence is MATPQSIFIFAICILMITELILA. Positions 26–90 constitute a J domain; the sequence is SYYDILGVPK…NRRKEYDTLG (65 aa). Positions 91-223 are divergent targeting domain; sequence HSAFTNGKGQ…VTTYTDCSGQ (133 aa). Ser133 bears the Phosphoserine mark.

In terms of assembly, interacts with HSPA5/BiP; interaction is direct. Interacts with ERN1/IRE1 (via the luminal region). Interacts with DERL1.

Its subcellular location is the endoplasmic reticulum lumen. Co-chaperone for Hsp70 protein HSPA5/BiP that acts as a key repressor of the ERN1/IRE1-mediated unfolded protein response (UPR). J domain-containing co-chaperones stimulate the ATPase activity of Hsp70 proteins and are required for efficient substrate recognition by Hsp70 proteins. In the unstressed endoplasmic reticulum, interacts with the luminal region of ERN1/IRE1 and selectively recruits HSPA5/BiP: HSPA5/BiP disrupts the dimerization of the active ERN1/IRE1 luminal region, thereby inactivating ERN1/IRE1. Also involved in endoplasmic reticulum-associated degradation (ERAD) of misfolded proteins. Required for survival of B-cell progenitors and normal antibody production. This chain is DnaJ homolog subfamily B member 9, found in Pongo abelii (Sumatran orangutan).